A 293-amino-acid chain; its full sequence is uncharacterized protein (293 aa).

This is an uncharacterized protein from Bos taurus (Bovine).